We begin with the raw amino-acid sequence, 156 residues long: ATP synthase subunit b (156 aa).

The chain crosses the membrane as a helical span at residues Leu-7–Pro-27.

Belongs to the ATPase B chain family. F-type ATPases have 2 components, F(1) - the catalytic core - and F(0) - the membrane proton channel. F(1) has five subunits: alpha(3), beta(3), gamma(1), delta(1), epsilon(1). F(0) has three main subunits: a(1), b(2) and c(10-14). The alpha and beta chains form an alternating ring which encloses part of the gamma chain. F(1) is attached to F(0) by a central stalk formed by the gamma and epsilon chains, while a peripheral stalk is formed by the delta and b chains.

Its subcellular location is the cell inner membrane. F(1)F(0) ATP synthase produces ATP from ADP in the presence of a proton or sodium gradient. F-type ATPases consist of two structural domains, F(1) containing the extramembraneous catalytic core and F(0) containing the membrane proton channel, linked together by a central stalk and a peripheral stalk. During catalysis, ATP synthesis in the catalytic domain of F(1) is coupled via a rotary mechanism of the central stalk subunits to proton translocation. In terms of biological role, component of the F(0) channel, it forms part of the peripheral stalk, linking F(1) to F(0). This Pasteurella multocida (strain Pm70) protein is ATP synthase subunit b.